Reading from the N-terminus, the 96-residue chain is Dynein light chain roadblock-type 2 (96 aa).

Ala-2 carries the post-translational modification N-acetylalanine.

It belongs to the GAMAD family. In terms of assembly, homodimer. The cytoplasmic dynein 1 complex consists of two catalytic heavy chains (HCs) and a number of non-catalytic subunits presented by intermediate chains (ICs), light intermediate chains (LICs) and light chains (LCs); the composition seems to vary in respect to the IC, LIC and LC composition. The heavy chain homodimer serves as a scaffold for the probable homodimeric assembly of the respective non-catalytic subunits. The ICs and LICs bind directly to the HC dimer and the LCs assemble on the IC dimer. Interacts with DYNC1I1 and DYNC1I2. Self-associates. Interacts with DYNLRB1.

It localises to the cytoplasm. The protein localises to the cytoskeleton. Acts as one of several non-catalytic accessory components of the cytoplasmic dynein 1 complex that are thought to be involved in linking dynein to cargos and to adapter proteins that regulate dynein function. Cytoplasmic dynein 1 acts as a motor for the intracellular retrograde motility of vesicles and organelles along microtubules. This chain is Dynein light chain roadblock-type 2 (DYNLRB2), found in Bos taurus (Bovine).